The sequence spans 83 residues: Short neurotoxin B (83 aa).

The signal sequence occupies residues 1–21 (MKTLLLTLVVVTIVCLDLGYT). Intrachain disulfides connect Cys-24/Cys-45, Cys-38/Cys-62, Cys-64/Cys-75, and Cys-76/Cys-81.

Belongs to the three-finger toxin family. Short-chain subfamily. Type I alpha-neurotoxin sub-subfamily. As to expression, expressed by the venom gland.

The protein localises to the secreted. Its function is as follows. Binds to muscle nicotinic acetylcholine receptor (nAChR) and inhibit acetylcholine from binding to the receptor, thereby impairing neuromuscular transmission. In Laticauda laticaudata (Blue-ringed sea krait), this protein is Short neurotoxin B.